The following is a 95-amino-acid chain: Small ribosomal subunit protein bS18 (95 aa).

The protein belongs to the bacterial ribosomal protein bS18 family. In terms of assembly, part of the 30S ribosomal subunit. Forms a tight heterodimer with protein bS6.

In terms of biological role, binds as a heterodimer with protein bS6 to the central domain of the 16S rRNA, where it helps stabilize the platform of the 30S subunit. In Acidiphilium cryptum (strain JF-5), this protein is Small ribosomal subunit protein bS18.